The chain runs to 863 residues: Leucine--tRNA ligase (863 aa).

The short motif at 42–52 (PYPSGRLHMGH) is the 'HIGH' region element. Positions 622 to 626 (KMSKS) match the 'KMSKS' region motif. K625 is a binding site for ATP.

It belongs to the class-I aminoacyl-tRNA synthetase family.

The protein localises to the cytoplasm. The enzyme catalyses tRNA(Leu) + L-leucine + ATP = L-leucyl-tRNA(Leu) + AMP + diphosphate. The protein is Leucine--tRNA ligase of Shewanella frigidimarina (strain NCIMB 400).